Here is a 250-residue protein sequence, read N- to C-terminus: DNA repair protein RecO (250 aa).

It belongs to the RecO family.

Involved in DNA repair and RecF pathway recombination. This is DNA repair protein RecO from Staphylococcus aureus (strain COL).